The chain runs to 474 residues: Calcium/calmodulin-dependent protein kinase type IV (474 aa).

A phosphoserine; by autocatalysis mark is found at Ser11 and Ser12. Positions 42–296 (FEVESELGRG…TFQALQHPWV (255 aa)) constitute a Protein kinase domain. ATP is bound by residues 48–56 (LGRGATSIV) and Lys71. An O-linked (GlcNAc) threonine glycan is attached at Thr53. An O-linked (GlcNAc) serine glycan is attached at Ser54. Ser133 is a glycosylation site (O-linked (GlcNAc) serine). Asp160 functions as the Proton acceptor in the catalytic mechanism. Ser185 carries an O-linked (GlcNAc) serine glycan. Phosphothreonine; by CaMKK1 and CaMKK2 is present on Thr196. The interval 297–336 (TGKAANFVHMDTAQKKLQEFNARRKLKAAVKAVVASSRLG) is autoinhibitory domain. Residues 302–319 (NFVHMDTAQKKLQEFNAR) form a PP2A-binding region. A calmodulin-binding region spans residues 318–337 (ARRKLKAAVKAVVASSRLGS). At Ser332 the chain carries Phosphoserine; by autocatalysis. Residues 336-474 (GSASSSHTNI…PQQDAILPEY (139 aa)) form a disordered region. Ser337 carries the post-translational modification Phosphoserine. Ser340, Ser341, and Ser352 each carry an O-linked (GlcNAc) serine glycan. Polar residues predominate over residues 342 to 356 (HTNIQESNKASSEAQ). Positions 360–392 (DGKDKTDPLENKMQAGDHEAAKAAADETMKLQS) are enriched in basic and acidic residues. A compositionally biased stretch (acidic residues) spans 393–413 (EEVEEEEGVKEEEEEEEEEEE). The segment covering 431-454 (QEMKRNSEETLKSVEEEMDPKAEE) has biased composition (basic and acidic residues). Residues Ser437 and Ser443 each carry the phosphoserine modification.

Belongs to the protein kinase superfamily. CAMK Ser/Thr protein kinase family. CaMK subfamily. As to quaternary structure, monomer. Interacts with protein phosphatase 2A (PPP2CA/PPP2CB); the interaction is mutually exclusive with binding to Ca(2+)/calmodulin. In terms of processing, phosphorylated by CaMKK1 and CaMKK2 on Thr-196. Dephosphorylated by protein phosphatase 2A. Autophosphorylated on Ser-11 and Ser-12. Glycosylation at Ser-185 modulates the phosphorylation of CaMK4 at Thr-196 and negatively regulates its activity toward CREB1 in basal conditions and during early inomycin stimulation. Post-translationally, the N-terminus of calspermin is blocked. As to expression, isoform 1 is expressed in brain and isoform 2 is testis specific.

Its subcellular location is the cytoplasm. The protein localises to the nucleus. The catalysed reaction is L-seryl-[protein] + ATP = O-phospho-L-seryl-[protein] + ADP + H(+). It carries out the reaction L-threonyl-[protein] + ATP = O-phospho-L-threonyl-[protein] + ADP + H(+). Activated by Ca(2+)/calmodulin. Binding of calmodulin results in conformational change that relieves intrasteric autoinhibition and allows phosphorylation of Thr-196 within the activation loop by CaMKK1 or CaMKK2. Phosphorylation of Thr-196 results in a 10-20-fold increase in total activity to generate Ca(2+)/calmodulin-independent activity. Autophosphorylation of the N-terminus Ser-11 and Ser-12 is required for full activation. Inactivated by protein phosphatase 2A (PPP2CA/PPP2CB) which dephosphorylates Thr-196, thereby terminating autonomous activity and helping to maintain the enzyme in its autoinhibited state. Its function is as follows. Calcium/calmodulin-dependent protein kinase that operates in the calcium-triggered CaMKK-CaMK4 signaling cascade and regulates, mainly by phosphorylation, the activity of several transcription activators, such as CREB1, MEF2D, JUN and RORA, which play pivotal roles in immune response, inflammation, and memory consolidation. In the thymus, regulates the CD4(+)/CD8(+) double positive thymocytes selection threshold during T-cell ontogeny. In CD4 memory T-cells, is required to link T-cell antigen receptor (TCR) signaling to the production of IL2, IFNG and IL4 (through the regulation of CREB and MEF2). Regulates the differentiation and survival phases of osteoclasts and dendritic cells (DCs). Mediates DCs survival by linking TLR4 and the regulation of temporal expression of BCL2. Phosphorylates the transcription activator CREB1 on 'Ser-133' in hippocampal neuron nuclei and contribute to memory consolidation and long term potentiation (LTP) in the hippocampus. Can activate the MAP kinases MAPK1/ERK2, MAPK8/JNK1 and MAPK14/p38 and stimulate transcription through the phosphorylation of ELK1 and ATF2. Can also phosphorylate in vitro CREBBP, PRM2, MEF2A and STMN1/OP18. Functionally, heat-stable, acidic, calmodulin-binding protein. In Rattus norvegicus (Rat), this protein is Calcium/calmodulin-dependent protein kinase type IV (Camk4).